Consider the following 345-residue polypeptide: MNINDILKKLINKSDLEIDEAEELAKAIIRGEVPEILVSAILVALRMKGESKNEIVGFARAMRELAIKIDVPNAIDTAGTGGDGLGTVNVSTASAILLSLINPVAKHGNRAVSGKSGSADVLEALGYNIIVPPERAKELIHKTNFVFLFAQYYHPAMKNVANVRKTLGIRTIFNILGPLTNPANAKYQLMGVFSKDHLDLLSKSAYELDFNKVILVHGEPGIDEVSPIGKTFMKIVSKRGIEEVKFDVTDFGISSIPIDKLIVNSAEDSAIKIVRAFLGKDEHVAEFIKINTAVALFALDKVSDFKEGYEYAKYLIENSVNKLNEIISLNGDLTKLKTIMVKSSG.

5-phospho-alpha-D-ribose 1-diphosphate contacts are provided by residues G79, 82–83 (GD), T87, 89–92 (NVST), 106–114 (KHGNRAVSG), and S118. G79 contributes to the anthranilate binding site. Residue S91 coordinates Mg(2+). N109 is an anthranilate binding site. An anthranilate-binding site is contributed by R164. D223 and E224 together coordinate Mg(2+).

It belongs to the anthranilate phosphoribosyltransferase family. In terms of assembly, homodimer. Mg(2+) is required as a cofactor.

The enzyme catalyses N-(5-phospho-beta-D-ribosyl)anthranilate + diphosphate = 5-phospho-alpha-D-ribose 1-diphosphate + anthranilate. The protein operates within amino-acid biosynthesis; L-tryptophan biosynthesis; L-tryptophan from chorismate: step 2/5. Catalyzes the transfer of the phosphoribosyl group of 5-phosphorylribose-1-pyrophosphate (PRPP) to anthranilate to yield N-(5'-phosphoribosyl)-anthranilate (PRA). The polypeptide is Anthranilate phosphoribosyltransferase (Saccharolobus islandicus (strain L.S.2.15 / Lassen #1) (Sulfolobus islandicus)).